We begin with the raw amino-acid sequence, 212 residues long: Imidazole glycerol phosphate synthase subunit HisH 2 (212 aa).

Residues 3–212 (RVAIIDYGIN…LMSNFLQWNP (210 aa)) enclose the Glutamine amidotransferase type-1 domain. C82 functions as the Nucleophile in the catalytic mechanism. Residues H192 and E194 contribute to the active site.

Heterodimer of HisH and HisF.

The protein resides in the cytoplasm. It carries out the reaction 5-[(5-phospho-1-deoxy-D-ribulos-1-ylimino)methylamino]-1-(5-phospho-beta-D-ribosyl)imidazole-4-carboxamide + L-glutamine = D-erythro-1-(imidazol-4-yl)glycerol 3-phosphate + 5-amino-1-(5-phospho-beta-D-ribosyl)imidazole-4-carboxamide + L-glutamate + H(+). The enzyme catalyses L-glutamine + H2O = L-glutamate + NH4(+). Its pathway is amino-acid biosynthesis; L-histidine biosynthesis; L-histidine from 5-phospho-alpha-D-ribose 1-diphosphate: step 5/9. In terms of biological role, IGPS catalyzes the conversion of PRFAR and glutamine to IGP, AICAR and glutamate. The HisH subunit provides the glutamine amidotransferase activity that produces the ammonia necessary to HisF for the synthesis of IGP and AICAR. The polypeptide is Imidazole glycerol phosphate synthase subunit HisH 2 (Nitrobacter winogradskyi (strain ATCC 25391 / DSM 10237 / CIP 104748 / NCIMB 11846 / Nb-255)).